The sequence spans 1624 residues: ATP-binding cassette sub-family A member 6 (1624 aa).

The chain crosses the membrane as a helical span at residues 31–51; that stretch reads LLEWSIPIIIGLHMGLFSYLA. 2 N-linked (GlcNAc...) asparagine glycosylation sites follow: Asn-84 and Asn-91. A run of 6 helical transmembrane segments spans residues 222 to 242, 267 to 287, 297 to 317, 326 to 346, 356 to 376, and 395 to 415; these read IFIL…SSNV, WGLI…IIIT, FLVI…VTFL, VLTN…GFTV, EWVL…KVIF, and VMIA…VLAL. One can recognise an ABC transporter 1 domain in the interval 478-713; sequence IRIRNIKKEY…WGLGYHLSLF (236 aa). Position 514 to 521 (514 to 521) interacts with ATP; it reads GHSGAGKS. Asn-576 is a glycosylation site (N-linked (GlcNAc...) asparagine). Helical transmembrane passes span 854–874, 971–991, 1005–1025, 1058–1078, 1094–1114, 1130–1150, 1154–1174, and 1194–1214; these read AFLI…IEYV, LHCF…MLNH, FIVL…CVIC, WCGQ…TSYF, IVFS…FLTY, WSIC…NGPF, LVIS…LVVL, and AVDL…IFVL. One can recognise an ABC transporter 2 domain in the interval 1282 to 1520; it reads LHKEYAGQKK…FGQDYVLELR (239 aa). 1320–1327 lines the ATP pocket; sequence GPDGAGKS.

This sequence belongs to the ABC transporter superfamily. ABCA family. Widely expressed with higher expression in heart, lung, brain, spleen and testis.

Its subcellular location is the golgi apparatus membrane. Functionally, probable transporter which may play a role in macrophage lipid transport and homeostasis. The sequence is that of ATP-binding cassette sub-family A member 6 (Abca6) from Mus musculus (Mouse).